We begin with the raw amino-acid sequence, 649 residues long: tRNA-guanine(15) transglycosylase (649 aa).

The active-site Nucleophile is the Asp88. The substrate site is built by Asp123 and Ala194. Zn(2+)-binding residues include Cys280, Cys282, and Cys285. In terms of domain architecture, PUA spans 572-647 (KYRVIVDKSV…VAVNIRGGLK (76 aa)).

This sequence belongs to the archaeosine tRNA-ribosyltransferase family. The cofactor is Zn(2+).

It catalyses the reaction guanosine(15) in tRNA + 7-cyano-7-deazaguanine = 7-cyano-7-carbaguanosine(15) in tRNA + guanine. It participates in tRNA modification; archaeosine-tRNA biosynthesis. Exchanges the guanine residue with 7-cyano-7-deazaguanine (preQ0) at position 15 in the dihydrouridine loop (D-loop) of archaeal tRNAs. The sequence is that of tRNA-guanine(15) transglycosylase from Methanococcus vannielii (strain ATCC 35089 / DSM 1224 / JCM 13029 / OCM 148 / SB).